Consider the following 446-residue polypeptide: O-antigen polymerase (446 aa).

The next 11 helical transmembrane spans lie at 11–31 (ICSY…VINE), 33–53 (FCEI…VIII), 58–78 (QGGF…FILI), 104–124 (IYVF…VLLY), 147–167 (QLSM…IKSY), 186–206 (LYDE…SLLF), 211–231 (NFIL…LVGL), 252–272 (LKIK…SLFL), 355–375 (IYLG…SLAF), 391–411 (KLAY…IYFA), and 415–435 (LFDF…LSIV).

The protein resides in the cell inner membrane. The enzyme catalyses n lipid-linked O-antigen repeat units = a lipid-linked O antigen + (n-1) polyisoprenyl diphosphate.. Its pathway is bacterial outer membrane biogenesis; LPS O-antigen biosynthesis. Polymerase involved in the biosynthesis of the lipopolysaccharide (LPS). Catalyzes the polymerization of the O-antigen repeat units on the periplasmic face of the inner membrane, leading to the formation of the lipid-linked O-antigen molecule. In vitro, shows a preference for bacteria-based, undecaprenyl-containing substrates rather than eukaryote-based, dolichol-containing substrates. The chain is O-antigen polymerase from Escherichia coli.